The following is a 204-amino-acid chain: High frequency lysogenization protein HflD homolog (204 aa).

It belongs to the HflD family.

It is found in the cytoplasm. Its subcellular location is the cell inner membrane. This Xanthomonas axonopodis pv. citri (strain 306) protein is High frequency lysogenization protein HflD homolog.